Here is a 500-residue protein sequence, read N- to C-terminus: E3 ubiquitin-protein ligase TRIM69 (500 aa).

Residues 1–22 form a disordered region; it reads MEVSSRPPSNFDPGNYVEMSDP. A necessary for nuclear localization region spans residues 1–153; sequence MEVSSRPPSN…SMGQSKDFLQ (153 aa). An RING-type zinc finger spans residues 42-83; that stretch reads CPLCNDWFRDPLMLTCGHNFCQDCIQSFWKVHSKETFCPDCK. Residues 217 to 256 adopt a coiled-coil conformation; the sequence is NKEKDILNDLRDEGKLLNEEMEVNLNQIQEQCLVAKDMLA. Positions 306–500 constitute a B30.2/SPRY domain; it reads PIQYIIWKEM…KEPLHIVHPQ (195 aa). Position 342 is a phosphoserine (serine 342).

The protein belongs to the TRIM/RBCC family. As to quaternary structure, homo-multimer; required for antiviral activity. Interacts with PML. Phosphorylated. Phosphorylation is necessary for nuclear localization. As to expression, expressed in spermatid.

It localises to the cytoplasm. The protein resides in the nucleus. The protein localises to the nucleus speckle. It is found in the cytoskeleton. Its subcellular location is the microtubule organizing center. It localises to the centrosome. It carries out the reaction S-ubiquitinyl-[E2 ubiquitin-conjugating enzyme]-L-cysteine + [acceptor protein]-L-lysine = [E2 ubiquitin-conjugating enzyme]-L-cysteine + N(6)-ubiquitinyl-[acceptor protein]-L-lysine.. It participates in protein modification; protein ubiquitination. E3 ubiquitin ligase that plays an important role in antiviral immunity by restricting different viral infections including dengue virus or vesicular stomatitis indiana virus. Ubiquitinates viral proteins such as dengue virus NS3 thereby limiting infection. In addition, acts as a key mediator of type I interferon induced microtubule stabilization by directly associating to microtubules independently of its E3 ligase activity. Also plays a role in cataract formation together with TP53. Mechanistically, inhibits UVB-induced cell apoptosis and reactive oxygen species (ROS) production by inducing TP53 ubiquitination. Regulates centrosome dynamics and mitotic progression by ubiquitinating STK3/MST2; leading to its redistribution to the perinuclear cytoskeleton and subsequent phosphorylation by PLK1. The chain is E3 ubiquitin-protein ligase TRIM69 (Trim69) from Mus musculus (Mouse).